Consider the following 613-residue polypeptide: Activating transcription factor 3 (613 aa).

Disordered stretches follow at residues 77 to 115 and 133 to 218; these read RHFN…PSVQ and KRKL…NKIA. Positions 85–105 are enriched in low complexity; the sequence is GQSHSQDSSHSSCSGSPLDSP. Positions 138-147 are enriched in polar residues; sequence TCDSSSGSEQ. The span at 158 to 175 shows a compositional bias: low complexity; it reads NHNGHSGSSNNYSGSMSN. The segment covering 178-191 has biased composition (acidic residues); sequence DLDDDCEESSDDDS. The bZIP domain occupies 205–268; it reads EDRRRRRRER…QKLVDMLKSH (64 aa). The basic motif stretch occupies residues 207 to 229; sequence RRRRRRERNKIAATKCRMKKRER. Residues 233–261 are leucine-zipper; sequence LIKESEVLDTQNVELKNQVRQLETERQKL. A disordered region spans residues 337–446; sequence PNGYCKPSPS…SSNATSSTTP (110 aa). Residues 356-368 show a composition bias toward low complexity; it reads QQQQQQQQQQQPQ. A compositionally biased stretch (polar residues) spans 369 to 389; sequence SLNPAGNNVIDQQHANPSPSL. Residues 402-446 are compositionally biased toward low complexity; the sequence is GSASNHPSHNNNNNNNNSSGASSNTSNNNSNISSHSSNATSSTTP.

The protein belongs to the bZIP family. ATF subfamily. In terms of assembly, interacts with Jra/jun; the interaction enhances the DNA-binding activity of Atf3. In terms of tissue distribution, moderate expression in some regions of the larval nervous system, the ring gland and imaginal disks. High expression in larval gut, excretory malpighian tubules, salivary glands, and, to a lesser extent, the fat body where levels are approximately 2.5-fold less than the gut.

The protein localises to the nucleus. Its function is as follows. Transcription factor which binds to the cAMP response element (CRE). Regulates metabolic and innate immune homeostasis, possibly by controlling appropriate expression of genes involved in peritrophic matrix composition and ensuring the normal digestive and immune function of the gut. Required for the expression of odorant receptors Or43b and Or47b. The protein is Activating transcription factor 3 of Drosophila melanogaster (Fruit fly).